Here is a 168-residue protein sequence, read N- to C-terminus: I-Kappa-B like protein G2 (168 aa).

ANK repeat units follow at residues 56–88 (SQRQ…DING) and 93–123 (GGNT…NKTA).

This sequence belongs to the polydnaviridae I-Kappa-B-like protein family.

Functionally, suppresses the host immune response through NF-kappa-B inactivation. Possesses ankyrin repeat domains required for NF-kappa-B binding but lacks the regulatory regions required for dissociation from NF-kappa-B and degradation. Therefore, prevents host NF-kappa-B release and subsequent activation. This chain is I-Kappa-B like protein G2 (G4), found in Microplitis demolitor (Parasitoid wasp).